Consider the following 782-residue polypeptide: Endonuclease MutS2 (782 aa).

336-343 is an ATP binding site; it reads GPNTGGKT. Residues 707–782 enclose the Smr domain; it reads LDLRGYRYEE…GFGVTVAELK (76 aa).

This sequence belongs to the DNA mismatch repair MutS family. MutS2 subfamily. In terms of assembly, homodimer. Binds to stalled ribosomes, contacting rRNA.

In terms of biological role, endonuclease that is involved in the suppression of homologous recombination and thus may have a key role in the control of bacterial genetic diversity. Its function is as follows. Acts as a ribosome collision sensor, splitting the ribosome into its 2 subunits. Detects stalled/collided 70S ribosomes which it binds and splits by an ATP-hydrolysis driven conformational change. Acts upstream of the ribosome quality control system (RQC), a ribosome-associated complex that mediates the extraction of incompletely synthesized nascent chains from stalled ribosomes and their subsequent degradation. Probably generates substrates for RQC. The polypeptide is Endonuclease MutS2 (Staphylococcus epidermidis (strain ATCC 35984 / DSM 28319 / BCRC 17069 / CCUG 31568 / BM 3577 / RP62A)).